We begin with the raw amino-acid sequence, 302 residues long: NAD kinase 2 (302 aa).

The active-site Proton acceptor is the Asp-79. NAD(+) contacts are provided by residues 79–80 (DG), 153–154 (NE), Asp-183, 194–199 (TAYSLS), Ala-218, and Asn-252.

This sequence belongs to the NAD kinase family. It depends on a divalent metal cation as a cofactor.

It is found in the cytoplasm. The catalysed reaction is NAD(+) + ATP = ADP + NADP(+) + H(+). In terms of biological role, involved in the regulation of the intracellular balance of NAD and NADP, and is a key enzyme in the biosynthesis of NADP. Catalyzes specifically the phosphorylation on 2'-hydroxyl of the adenosine moiety of NAD to yield NADP. In Prochlorococcus marinus subsp. pastoris (strain CCMP1986 / NIES-2087 / MED4), this protein is NAD kinase 2.